The chain runs to 160 residues: Large ribosomal subunit protein uL22c (160 aa).

Belongs to the universal ribosomal protein uL22 family. As to quaternary structure, part of the 50S ribosomal subunit.

The protein resides in the plastid. It is found in the chloroplast. This protein binds specifically to 23S rRNA. In terms of biological role, the globular domain of the protein is located near the polypeptide exit tunnel on the outside of the subunit, while an extended beta-hairpin is found that lines the wall of the exit tunnel in the center of the 70S ribosome. This chain is Large ribosomal subunit protein uL22c (rpl22), found in Panax ginseng (Korean ginseng).